Here is an 896-residue protein sequence, read N- to C-terminus: Translation initiation factor IF-2 (896 aa).

2 stretches are compositionally biased toward basic and acidic residues: residues 94–159 and 166–219; these read KRDP…KDKV and DMTK…EKNW. The interval 94–307 is disordered; that stretch reads KRDPQEAERL…GSALQQGFQK (214 aa). Residues 256 to 271 are compositionally biased toward basic residues; it reads GRGRNAKAARPAKKGN. Over residues 272-285 the composition is skewed to basic and acidic residues; it reads KHAESKADREEARA. The 170-residue stretch at 395 to 564 folds into the tr-type G domain; it reads PRAPVVTIMG…LLQAEVLELK (170 aa). A G1 region spans residues 404–411; sequence GHVDHGKT. 404–411 serves as a coordination point for GTP; the sequence is GHVDHGKT. A G2 region spans residues 429–433; that stretch reads GITQH. Positions 450-453 are G3; that stretch reads DTPG. Residues 450-454 and 504-507 contribute to the GTP site; these read DTPGH and NKID. The tract at residues 504 to 507 is G4; sequence NKID. Positions 540–542 are G5; the sequence is SAK.

It belongs to the TRAFAC class translation factor GTPase superfamily. Classic translation factor GTPase family. IF-2 subfamily.

The protein resides in the cytoplasm. One of the essential components for the initiation of protein synthesis. Protects formylmethionyl-tRNA from spontaneous hydrolysis and promotes its binding to the 30S ribosomal subunits. Also involved in the hydrolysis of GTP during the formation of the 70S ribosomal complex. In Klebsiella oxytoca, this protein is Translation initiation factor IF-2 (infB).